Reading from the N-terminus, the 766-residue chain is LPS-assembly protein LptD (766 aa).

An N-terminal signal peptide occupies residues 1 to 18; sequence MNIRYLLLLSLMPHLVWA.

It belongs to the LptD family. In terms of assembly, component of the lipopolysaccharide transport and assembly complex. Interacts with LptE and LptA.

It is found in the cell outer membrane. Together with LptE, is involved in the assembly of lipopolysaccharide (LPS) at the surface of the outer membrane. The chain is LPS-assembly protein LptD from Shewanella denitrificans (strain OS217 / ATCC BAA-1090 / DSM 15013).